The primary structure comprises 76 residues: Defensin-like protein 125 (76 aa).

Positions 1 to 25 (MTKAITLAIFMVVLVLGMVTKETQG) are cleaved as a signal peptide. 4 disulfide bridges follow: C30–C74, C41–C60, C46–C68, and C50–C70.

The protein belongs to the DEFL family.

The protein resides in the secreted. This is Defensin-like protein 125 (LCR54) from Arabidopsis thaliana (Mouse-ear cress).